The following is a 290-amino-acid chain: Nucleotide-binding protein XfasM23_0667 (290 aa).

13-20 contributes to the ATP binding site; it reads GLSGSGKS. Residue 65-68 coordinates GTP; it reads DIRS.

Belongs to the RapZ-like family.

Functionally, displays ATPase and GTPase activities. The sequence is that of Nucleotide-binding protein XfasM23_0667 from Xylella fastidiosa (strain M23).